The chain runs to 849 residues: G-type lectin S-receptor-like serine/threonine-protein kinase B120 (849 aa).

The signal sequence occupies residues 1–25 (MRFFRKTSLYLSLFLYFFLYESSMA). Positions 26-153 (ANTIRRGESL…DTDRPIWESF (128 aa)) constitute a Bulb-type lectin domain. Over 26-438 (ANTIRRGESL…SEVGENRKTK (413 aa)) the chain is Extracellular. Asn-110, Asn-191, Asn-210, Asn-230, Asn-273, and Asn-282 each carry an N-linked (GlcNAc...) asparagine glycan. The 38-residue stretch at 295-332 (PDSECDQYNRCGKFGICDMKGSNGICSCIHGYEQVSVG) folds into the EGF-like; atypical domain. 2 disulfide bridges follow: Cys-299–Cys-311 and Cys-305–Cys-320. N-linked (GlcNAc...) asparagine glycans are attached at residues Asn-333, Asn-349, and Asn-388. Residues 346–427 (CERNISVGED…GGSSLHIRLA (82 aa)) enclose the PAN domain. Cystine bridges form between Cys-381-Cys-402 and Cys-385-Cys-391. Residues 439-459 (IAVIVAVLVGVILIGIFALLL) form a helical membrane-spanning segment. The Cytoplasmic segment spans residues 460–849 (WRFKRKKDVS…EITSTVVLGR (390 aa)). Positions 529 to 814 (FCKENELGRG…TLAAPRQPTF (286 aa)) constitute a Protein kinase domain. ATP-binding positions include 535 to 543 (LGRGGFGPV) and Lys-557. Position 563 is a phosphoserine (Ser-563). The tract at residues 618–635 (TKQALIDWKLRFSIIEGI) is caM-binding. Catalysis depends on Asp-654, which acts as the Proton acceptor. A phosphoserine mark is found at Ser-658 and Ser-671. Thr-688 is modified (phosphothreonine). Ser-732 and Ser-837 each carry phosphoserine. Thr-844 bears the Phosphothreonine mark.

The protein belongs to the protein kinase superfamily. Ser/Thr protein kinase family.

The protein resides in the cell membrane. It catalyses the reaction L-seryl-[protein] + ATP = O-phospho-L-seryl-[protein] + ADP + H(+). The enzyme catalyses L-threonyl-[protein] + ATP = O-phospho-L-threonyl-[protein] + ADP + H(+). In Arabidopsis thaliana (Mouse-ear cress), this protein is G-type lectin S-receptor-like serine/threonine-protein kinase B120 (B120).